A 203-amino-acid polypeptide reads, in one-letter code: MVRLNVKPTRMELNNLKERLKTAERGHKLLKDKRDELMRRFISLIRENNRLRKEVESYLIDNLKSFAVAKSLKNSLMVEELFSIPSKEIELFIEKENIMSVTVPRMHMNITSQNENSEYSYLSSNSEMDDVFATMNSLIDKLLRLAEVEKTCQLMADEIEKTRRRVNGLEYSIIPNLSETIHYIELKLEEAERANLVRIMKVK.

Belongs to the V-ATPase D subunit family.

In terms of biological role, produces ATP from ADP in the presence of a proton gradient across the membrane. In Streptococcus pneumoniae (strain CGSP14), this protein is V-type ATP synthase subunit D.